A 395-amino-acid polypeptide reads, in one-letter code: Serine/threonine-protein kinase BIK1 (395 aa).

A lipid anchor (N-myristoyl glycine) is attached at glycine 2. Residue cysteine 4 is the site of S-palmitoyl cysteine attachment. A Phosphoserine modification is found at serine 26. Lysine 31 is covalently cross-linked (Glycyl lysine isopeptide (Lys-Gly) (interchain with G-Cter in ubiquitin)). 3 positions are modified to phosphoserine: serine 32, serine 33, and serine 34. Threonine 35 is subject to Phosphothreonine. A Glycyl lysine isopeptide (Lys-Gly) (interchain with G-Cter in ubiquitin) cross-link involves residue lysine 41. Threonine 42 is modified (phosphothreonine). Residue serine 48 is modified to Phosphoserine; by autocatalysis and BAK1. Threonine 50 bears the Phosphothreonine mark. Position 54 is a phosphoserine; by autocatalysis (serine 54). Threonine 56 bears the Phosphothreonine; by autocatalysis mark. Threonine 64 carries the phosphothreonine modification. The Protein kinase domain maps to 67–356; it reads FRPDSVIGEG…RALQQLQDNL (290 aa). A Phosphoserine; by autocatalysis and BAK1 modification is found at serine 71. Residue 73–81 coordinates ATP; it reads IGEGGFGCV. Phosphoserine; by EFR is present on serine 89. A Required for physical interaction with and phosphorylation of downstream signaling proteins (e.g. WRKY33, WRKY50, WRKY51 and WRKY57) to activate EFR-mediated immune signaling motif is present at residues 89–90; the sequence is ST. Phosphothreonine; by EFR is present on threonine 90. Residue lysine 95 forms a Glycyl lysine isopeptide (Lys-Gly) (interchain with G-Cter in ubiquitin) linkage. Lysine 105 contacts ATP. Phosphothreonine; by EFR is present on threonine 120. Position 129 is a phosphoserine; by autocatalysis (serine 129). Position 129 is a phosphoserine; by EFR (serine 129). Residue tyrosine 150 is modified to Phosphotyrosine. Tyrosine 168 is modified (phosphotyrosine; by autocatalysis). Glycyl lysine isopeptide (Lys-Gly) (interchain with G-Cter in ubiquitin) cross-links involve residues lysine 170 and lysine 186. Residue serine 193 is modified to Phosphoserine. Aspartate 202 functions as the Proton acceptor in the catalytic mechanism. Serine 206 carries the post-translational modification Phosphoserine; by autocatalysis and BAK1. Tyrosine 214 carries the phosphotyrosine; by autocatalysis modification. Residue serine 219 is modified to Phosphoserine. Serine 233 bears the Phosphoserine; by autocatalysis mark. Serine 236 is modified (O-UMP-serine; by Xanthomonas campestris effector XopAC/AvrAC; alternate). Serine 236 carries the phosphoserine; by autocatalysis and BAK1; alternate modification. Residue threonine 237 is modified to O-UMP-threonine; by Xanthomonas campestris effector XopAC/AvrAC; alternate. At threonine 237 the chain carries Phosphothreonine; by autocatalysis and BAK1; alternate. At threonine 242 the chain carries Phosphothreonine; by autocatalysis and BAK1. Position 243 is a phosphotyrosine (tyrosine 243). Residue tyrosine 250 is modified to Phosphotyrosine; by autocatalysis. A phosphoserine; by autocatalysis mark is found at serine 252 and serine 253. A Glycyl lysine isopeptide (Lys-Gly) (interchain with G-Cter in ubiquitin) cross-link involves residue lysine 286. Position 314 is a phosphothreonine; by autocatalysis (threonine 314). Lysine 337 is covalently cross-linked (Glycyl lysine isopeptide (Lys-Gly) (interchain with G-Cter in ubiquitin)). Threonine 341 is subject to Phosphothreonine. Over residues 354–365 the composition is skewed to polar residues; the sequence is DNLGKPSQTNPV. The interval 354–395 is disordered; that stretch reads DNLGKPSQTNPVKDTKKLGFKTGTTKSSEKRFTQKPFGRHLV. A Glycyl lysine isopeptide (Lys-Gly) (interchain with G-Cter in ubiquitin) cross-link involves residue lysine 358. A Phosphoserine; by autocatalysis and BAK1 modification is found at serine 360. Threonine 362 is modified (phosphothreonine; by autocatalysis and BAK1). Lysine 366 participates in a covalent cross-link: Glycyl lysine isopeptide (Lys-Gly) (interchain with G-Cter in ubiquitin). At threonine 368 the chain carries Phosphothreonine; by autocatalysis and BAK1. A phosphothreonine mark is found at threonine 375 and threonine 377.

The protein belongs to the protein kinase superfamily. Ser/Thr protein kinase family. As to quaternary structure, interacts with FLS2. Activation of FLS2 by flagellin (flg22) induces the dissociation of the complex. Interacts with BAK1. Interacts with the Xanthomonas campestris effector XopAC/AvrAC. Interacts with CPK28. Interacts with PEPR1. Interacts with PP2C38. Interacts with BRI1. Interacts with RBOHD. Binds to EFR when not phosphorylated at Ser-89 and Thr-90, in the absence of pathogen elicitor; dissociates upon pathogen-associated molecular pattern (PAMP)-triggered activation by EFR-mediated phosphorylation. Interacts directly with and phosphorylates WRKY transcription factors in the nucleus involved in the jasmonic acid (JA) and salicylic acid (SA) regulation (e.g. WRKY33, WRKY50, WRKY51 and WRKY57) to modulate defense hormones during plant immunity. Binds to ATL44/RHA3A and ATL45/RHA3B. Binds to SIK1 to be phosphorylated and stabilized. In terms of processing, phosphorylated by SIK1 to be stabilized. Phosphorylated by FLS2 and BAK1. Autophosphorylated. Autophosphorylation is reduced in presence of the Xanthomonas campestris effector XopAC/AvrAC. Phosphorylated, especially by EFR at Ser-89 and Thr-90, in response to the microbe-associated molecular pattern (MAMP) flg22. Phosphorylation in response to flg22 is abolished in presence of the Xanthomonas campestris effector XopAC/AvrAC. Phosphorylated at Ser-233, Ser-236 and Thr-237 by PEPR1. Phosphorylated at Tyr-150, Tyr-243 and Tyr-250. Tyrosine phosphorylation is required for BIK1 function in plant innate immunity. Post-translationally, uridylylated at Ser-236 and Thr-237 by the Xanthomonas campestris effector XopAC/AvrAC. This conceals conserved phosphorylation sites in the activation loop, reducing BIK1 kinase activity and consequently inhibiting downstream signaling. Monoubiquitinated by ATL44/RHA3A and ATL45/RHA3B following phosphorylation upon the recognition of microbe-associated molecular patterns (MAMPs, e.g. flg22) by pattern recognition receptors (PRRs), then released from the FLS2/BAK1 complex and internalized dynamically into endocytic compartments followed by the activation of immune signaling.

Its subcellular location is the cell membrane. The protein localises to the endosome membrane. It localises to the nucleus. The catalysed reaction is L-seryl-[protein] + ATP = O-phospho-L-seryl-[protein] + ADP + H(+). It catalyses the reaction L-threonyl-[protein] + ATP = O-phospho-L-threonyl-[protein] + ADP + H(+). Kinase activation is repressed by the phosphatase PP2C38. Plays a central role in immune responses. Required to activate the resistance responses to necrotrophic pathogens, including the regulation of defense hormone expression (e.g. jasmonic acid (JA) and salicylic acid (SA)). Phosphorylates FLS2 and BAK1. Involved in pathogen-associated molecular pattern (PAMP)-triggered immunity (PTI) signaling, including calcium signaling, and defense responses downstream of FLS2; upon PAMP recognition, first phosphorylated by FLS2 and SIK1 prior to being monoubiquitinated by ATL44/RHA3A and ATL45/RHA3B at the plasma membrane, then internalized dynamically into endocytic compartments together with FLS2. Acts additively with PBL1 in PTI defenses. Acts as a positive regulator of the PAMP flg22-induced increase of cytosolic calcium. Upon flg22 perception, phosphorylates and activates the calcium-permeable channel OSCA1.3, promoting stomatal closure. Phosphorylates the NADPH oxidase RBOHD at specific sites in a calcium-independent manner to enhance reactive oxygen species (ROS) generation upon flg22 perception. ROS production in response to flg22 controls stomatal movement and restriction of bacterial entry into leaf tissues. Seems not required for flg22-induced MAPK activation. Required for Pep1-induced defenses. Pep1 is an endogenous elicitor that potentiates PAMP-inducible plant responses. In association with PEPR1, acts downstream of the canonical ethylene signaling cascade to regulate ethylene responses. Involved in ethylene signaling. Destabilizes EIN3, the key transcription activator in ethylene signaling, and represses EIN3-dependent transcription. Acts as a negative regulator in brassinosteroid (BR) signaling. Functions in BR signaling by direct interaction with the BR receptor BRI1 cytosolic kinase domain. Required during SCOOP small peptides (e.g. SCOOP10 and SCOOP12) perception and signaling; receptor-like cytosolic kinases (RLCK) activated by BAK1/SERK3 and SERK4 coreceptors when associated with MIK2 upon the perception of SCOOP peptides. In terms of biological role, (Microbial infection) Xanthomonas campestris effector AvrAC/XopAC-mediated uridylylation prevents activation by phosphorylation at the same residues, thus affecting immune responses and reducing defense responses toward X.campestris, mediating avrAC/XopAC virulence functions. The sequence is that of Serine/threonine-protein kinase BIK1 from Arabidopsis thaliana (Mouse-ear cress).